A 345-amino-acid polypeptide reads, in one-letter code: Trace amine-associated receptor 6 (345 aa).

The Extracellular portion of the chain corresponds to 1-32 (MSSNSSLLVAVQLCYANVNGSCVKIPFSPGSR). 2 N-linked (GlcNAc...) asparagine glycosylation sites follow: N4 and N19. Cystine bridges form between C22-C186 and C105-C190. A helical transmembrane segment spans residues 33–53 (VILYIVFGFGAVLAVFGNLLV). Residues 54 to 68 (MISILHFKQLHSPTN) are Cytoplasmic-facing. Residues 69–89 (FLVASLACADFLVGVTVMPFS) traverse the membrane as a helical segment. At 90-107 (MVRTVESCWYFGRSFCTF) the chain is on the extracellular side. The chain crosses the membrane as a helical span at residues 108–128 (HTCCDVAFCYSSLFHLCFISI). The Cytoplasmic segment spans residues 129-147 (DRYIAVTDPLVYPTKFTVS). A helical transmembrane segment spans residues 148–168 (VSGICISVSWILPLMYSGAVF). Over 169–202 (YTGVYDDGLEELSDALNCIGGCQTVVNQNWVLTD) the chain is Extracellular. The helical transmembrane segment at 203 to 223 (FLSFFIPTFIMIILYGNIFLV) threads the bilayer. The Cytoplasmic portion of the chain corresponds to 224–259 (ARRQAKKIENTGSKTESSSESYKARVARRERKAAKT). The helical transmembrane segment at 260–276 (LGVTVVAFMISWLPYSI) threads the bilayer. Residues 277 to 282 (DSLIDA) lie on the Extracellular side of the membrane. The chain crosses the membrane as a helical span at residues 283 to 302 (FMGFITPACIYEICCWCAYY). The Cytoplasmic portion of the chain corresponds to 303–345 (NSAMNPLIYALFYPWFRKAIKVIVTGQVLKNSSATMNLFSEHI).

This sequence belongs to the G-protein coupled receptor 1 family. In terms of tissue distribution, expressed at low abundance in various brain tissues, as well as in fetal liver, but not in the cerebellum or placenta. In the brain, comparable levels of expression in basal ganglia, frontal cortex, substantia nigra, amygdala and hippocampus, highest expression in hippocampus and lowest expression in basal ganglia.

The protein localises to the cell membrane. Functionally, olfactory receptor specific for trace amines, such as beta-phenylethylamine (beta-PEA). Trace amine compounds are enriched in animal body fluids and act on trace amine-associated receptors (TAARs) to elicit both intraspecific and interspecific innate behaviors. Beta-PEA-binding causes a conformation change that triggers signaling via G(s)-class of G alpha proteins (GNAL or GNAS). The chain is Trace amine-associated receptor 6 from Homo sapiens (Human).